We begin with the raw amino-acid sequence, 52 residues long: Lysis protein for colicin N (52 aa).

A signal peptide spans 1–17 (MCGKILLILFFIMTLSA). Residue Cys-18 is the site of N-palmitoyl cysteine attachment. A lipid anchor (S-diacylglycerol cysteine) is attached at Cys-18.

It localises to the cell outer membrane. Lysis proteins are required for both colicin release and partial cell lysis. This is Lysis protein for colicin N (cnl) from Escherichia coli.